Here is a 1135-residue protein sequence, read N- to C-terminus: Topless-related protein 4 (1135 aa).

Positions 4–36 (LSRELVFLILQFLDEEKFKDTVHRLEKESGFFF) constitute a LisH domain. Positions 34–92 (FFFNMRYFEDSVTAGEWDDVEKYLSGFTKVDDNRYSMKIFFEIRKQKYLEALDKKDHAK) constitute a CTLH domain. S214 is subject to Phosphoserine. Positions 281–303 (LKRERPRSPPTNSLSMDYQTADS) are disordered. Over residues 290-303 (PTNSLSMDYQTADS) the composition is skewed to polar residues. WD repeat units follow at residues 355–395 (SQGS…KLVS), 417–456 (EYTAAVNRVVWSPDGGLLGVAYSKHIVHIYSYHGGEDLRN), 462–503 (AHAG…KLHT), 506–547 (GHEA…SRVD), 550–593 (APGR…VKRT), 597–636 (LGKRSVGVVQFDTMKNKFLVAGDEFQVKFWDMDSVDLLSS), 638–680 (AAEG…RILH), 776–815 (LLPARVVKLIYTNSGGAILALAENAAHKLWKWQKSERNLL), 843–881 (NKEDVVPCFALSKNDSYVMSASGGKISLFNMMTFKTMTT), 884–924 (APPP…VKSK), 927–966 (GHQKRVTGLAFSNVLNVLVSSGADSQLCVWSMDGWEKQAS), and 1020–1059 (ESSGSVTDAVYSCDSQSIYAAFDDGSVSILTATTLQLKCR). The tract at residues 1095-1135 (DGGVHVIEPPGPEGKWGISAPPENGAGPSVSSAPGSDQQPR) is disordered. The segment covering 1119-1135 (GAGPSVSSAPGSDQQPR) has biased composition (low complexity).

In terms of assembly, tetramer. Interacts with WUS (via the C-terminal domain). Interacts with SPL (via EAR motif). Interacts with SPEAR3/TIE1. Binds to and corepresses GAF1/IDD2 at the promoter of GA20OX2 gene.

It is found in the nucleus. Functionally, transcription corepressor of Zinc finger transcription factors GAF1/IDD2 and ENY/IDD1 in regulation of gibberellin homeostasis and signaling. The chain is Topless-related protein 4 (TPR4) from Arabidopsis thaliana (Mouse-ear cress).